Here is a 315-residue protein sequence, read N- to C-terminus: Aspartate carbamoyltransferase catalytic subunit (315 aa).

Residues Arg-64 and Thr-65 each contribute to the carbamoyl phosphate site. Lys-93 contacts L-aspartate. Residues Arg-114, His-142, and Gln-145 each contribute to the carbamoyl phosphate site. L-aspartate contacts are provided by Arg-175 and Arg-237. 2 residues coordinate carbamoyl phosphate: Leu-276 and Pro-277.

This sequence belongs to the aspartate/ornithine carbamoyltransferase superfamily. ATCase family. As to quaternary structure, heterooligomer of catalytic and regulatory chains.

It carries out the reaction carbamoyl phosphate + L-aspartate = N-carbamoyl-L-aspartate + phosphate + H(+). It functions in the pathway pyrimidine metabolism; UMP biosynthesis via de novo pathway; (S)-dihydroorotate from bicarbonate: step 2/3. In terms of biological role, catalyzes the condensation of carbamoyl phosphate and aspartate to form carbamoyl aspartate and inorganic phosphate, the committed step in the de novo pyrimidine nucleotide biosynthesis pathway. This chain is Aspartate carbamoyltransferase catalytic subunit, found in Thermofilum pendens (strain DSM 2475 / Hrk 5).